Here is a 148-residue protein sequence, read N- to C-terminus: MKVELKILNKELIKELPGYATEGSAAIDLRACISESIYLKSGECKLIATGIAINIANPNYAAMILPRSGLGHKKGLVLGNGTGLIDSDYQGELMVSCFNRSQETIEIEPLMRFAQLVIVPVVQANFEIVEDFSQQSVRATGGFGHTGV.

Substrate-binding positions include 67–69, N80, 84–86, and M94; these read RSG and LID.

The protein belongs to the dUTPase family. Requires Mg(2+) as cofactor.

The catalysed reaction is dUTP + H2O = dUMP + diphosphate + H(+). Its pathway is pyrimidine metabolism; dUMP biosynthesis; dUMP from dCTP (dUTP route): step 2/2. Its function is as follows. This enzyme is involved in nucleotide metabolism: it produces dUMP, the immediate precursor of thymidine nucleotides and it decreases the intracellular concentration of dUTP so that uracil cannot be incorporated into DNA. The polypeptide is Deoxyuridine 5'-triphosphate nucleotidohydrolase (Francisella tularensis subsp. holarctica (strain FTNF002-00 / FTA)).